Reading from the N-terminus, the 204-residue chain is Large ribosomal subunit protein eL15 (204 aa).

Belongs to the eukaryotic ribosomal protein eL15 family. As to quaternary structure, component of the large ribosomal subunit.

The protein localises to the cytoplasm. Component of the large ribosomal subunit. The ribosome is a large ribonucleoprotein complex responsible for the synthesis of proteins in the cell. The chain is Large ribosomal subunit protein eL15 (rpl15) from Silurus asotus (Amur catfish).